The chain runs to 406 residues: Olfactomedin-like protein 3 (406 aa).

Positions 1-21 (MGPSTPLLILFLLSWSGPLQG) are cleaved as a signal peptide. Residues 25 to 101 (HLVEYMERRL…REVDYLETQN (77 aa)) are a coiled coil. Residues 134-401 (DCGYTISQVR…QIVYKLEMRK (268 aa)) enclose the Olfactomedin-like domain. C135 and C328 form a disulfide bridge. Residues N177 and N248 are each glycosylated (N-linked (GlcNAc...) asparagine).

This sequence belongs to the OLFML3 family. As to expression, abundant in placenta, moderate in liver and heart, whereas fairly weak in other tissues examined. On term placenta, mainly localized extracellularly surrounding the syncytiotrophoblastic cells and very rarely expressed in the maternal decidua layer.

It localises to the secreted. Secreted scaffold protein that plays an essential role in dorsoventral patterning during early development. Stabilizes axial formation by restricting chordin (CHRD) activity on the dorsal side. Acts by facilitating the association between the tolloid proteases and their substrate chordin (CHRD), leading to enhance chordin (CHRD) degradation. May have matrix-related function involved in placental and embryonic development, or play a similar role in other physiological processes. This chain is Olfactomedin-like protein 3 (OLFML3), found in Homo sapiens (Human).